Reading from the N-terminus, the 161-residue chain is MRIGLGYDVHKLTEDRKLIIGGVEIPHDKGLLGHSDADVLIHAIMDSILGALALGDIGKHFPDTDEEYKGADSMKLLEHVYNLITSKGYKIGNIDSTIIAQSPKMAPYIESMRSNISKVLNTDIDNINIKATTEEGLGFTGAKQGIASQSICLLLLTSQNN.

Residues Asp8 and His10 each contribute to the a divalent metal cation site. 4-CDP-2-C-methyl-D-erythritol 2-phosphate is bound by residues 8–10 and 34–35; these read DVH and HS. His42 lines the a divalent metal cation pocket. 4-CDP-2-C-methyl-D-erythritol 2-phosphate-binding positions include 56–58, 61–65, 100–106, 132–135, and Phe139; these read DIG, FPDTD, AQSPKMA, and TTEE.

This sequence belongs to the IspF family. Homotrimer. A divalent metal cation is required as a cofactor.

It catalyses the reaction 4-CDP-2-C-methyl-D-erythritol 2-phosphate = 2-C-methyl-D-erythritol 2,4-cyclic diphosphate + CMP. The protein operates within isoprenoid biosynthesis; isopentenyl diphosphate biosynthesis via DXP pathway; isopentenyl diphosphate from 1-deoxy-D-xylulose 5-phosphate: step 4/6. Functionally, involved in the biosynthesis of isopentenyl diphosphate (IPP) and dimethylallyl diphosphate (DMAPP), two major building blocks of isoprenoid compounds. Catalyzes the conversion of 4-diphosphocytidyl-2-C-methyl-D-erythritol 2-phosphate (CDP-ME2P) to 2-C-methyl-D-erythritol 2,4-cyclodiphosphate (ME-CPP) with a corresponding release of cytidine 5-monophosphate (CMP). This is 2-C-methyl-D-erythritol 2,4-cyclodiphosphate synthase from Clostridioides difficile (strain 630) (Peptoclostridium difficile).